We begin with the raw amino-acid sequence, 104 residues long: Iron-sulfur cluster assembly protein CyaY (104 aa).

The protein belongs to the frataxin family.

In terms of biological role, involved in iron-sulfur (Fe-S) cluster assembly. May act as a regulator of Fe-S biogenesis. This is Iron-sulfur cluster assembly protein CyaY from Vibrio vulnificus (strain CMCP6).